The chain runs to 29 residues: Beta-hexatoxin-Mr1a (29 aa).

3 disulfides stabilise this stretch: C2–C16, C9–C21, and C15–C26.

Belongs to the neurotoxin 15 family. 01 (magi-5) subfamily. Expressed by the venom gland.

Its subcellular location is the secreted. Its function is as follows. Insect and vertebrate active toxin. Binds at site 4 of mammalian voltage-gated sodium channels and shifts the activation voltage of the mammalian rNav1.2a (SCN2A) channel to more hyperpolarized voltages, whereas the insect channel, DmNav1 (para), is not affected. Causes temporary paralysis when injected into lepidopteran larvae at 8.6 nmol/g. A low intracranial injection dose into mice causes lacrimation, closure of the eyes and sweating. A high injection dose causes extensive lacrimation and death. The polypeptide is Beta-hexatoxin-Mr1a (Macrothele raveni (Funnel-web spider)).